Reading from the N-terminus, the 383-residue chain is Acetylornithine deacetylase (383 aa).

His-80 contacts Zn(2+). Asp-82 is a catalytic residue. A Zn(2+)-binding site is contributed by Asp-112. Glu-144 is an active-site residue. Residues Glu-145, Glu-169, and His-355 each contribute to the Zn(2+) site.

Belongs to the peptidase M20A family. ArgE subfamily. As to quaternary structure, homodimer. It depends on Zn(2+) as a cofactor. Co(2+) is required as a cofactor. Glutathione serves as cofactor.

It is found in the cytoplasm. It carries out the reaction N(2)-acetyl-L-ornithine + H2O = L-ornithine + acetate. It participates in amino-acid biosynthesis; L-arginine biosynthesis; L-ornithine from N(2)-acetyl-L-ornithine (linear): step 1/1. Catalyzes the hydrolysis of the amide bond of N(2)-acetylated L-amino acids. Cleaves the acetyl group from N-acetyl-L-ornithine to form L-ornithine, an intermediate in L-arginine biosynthesis pathway, and a branchpoint in the synthesis of polyamines. This is Acetylornithine deacetylase from Salmonella arizonae (strain ATCC BAA-731 / CDC346-86 / RSK2980).